A 190-amino-acid chain; its full sequence is Peptidyl-tRNA hydrolase (190 aa).

TRNA is bound at residue Tyr-14. His-19 serves as the catalytic Proton acceptor. TRNA contacts are provided by Tyr-64, Asn-66, and Asn-113.

Belongs to the PTH family. Monomer.

It localises to the cytoplasm. It carries out the reaction an N-acyl-L-alpha-aminoacyl-tRNA + H2O = an N-acyl-L-amino acid + a tRNA + H(+). Its function is as follows. Hydrolyzes ribosome-free peptidyl-tRNAs (with 1 or more amino acids incorporated), which drop off the ribosome during protein synthesis, or as a result of ribosome stalling. Catalyzes the release of premature peptidyl moieties from peptidyl-tRNA molecules trapped in stalled 50S ribosomal subunits, and thus maintains levels of free tRNAs and 50S ribosomes. The polypeptide is Peptidyl-tRNA hydrolase (Gemmatimonas aurantiaca (strain DSM 14586 / JCM 11422 / NBRC 100505 / T-27)).